The following is a 61-amino-acid chain: Small ribosomal subunit protein uS14 (61 aa).

The Zn(2+) site is built by Cys-24, Cys-27, Cys-40, and Cys-43.

This sequence belongs to the universal ribosomal protein uS14 family. Zinc-binding uS14 subfamily. In terms of assembly, part of the 30S ribosomal subunit. Contacts proteins S3 and S10. Zn(2+) is required as a cofactor.

Its function is as follows. Binds 16S rRNA, required for the assembly of 30S particles and may also be responsible for determining the conformation of the 16S rRNA at the A site. The chain is Small ribosomal subunit protein uS14 from Clostridium perfringens (strain ATCC 13124 / DSM 756 / JCM 1290 / NCIMB 6125 / NCTC 8237 / Type A).